The sequence spans 169 residues: S-ribosylhomocysteine lyase (169 aa).

The Fe cation site is built by His-54, His-58, and Cys-129.

The protein belongs to the LuxS family. In terms of assembly, homodimer. Requires Fe cation as cofactor.

It catalyses the reaction S-(5-deoxy-D-ribos-5-yl)-L-homocysteine = (S)-4,5-dihydroxypentane-2,3-dione + L-homocysteine. Its function is as follows. Involved in the synthesis of autoinducer 2 (AI-2) which is secreted by bacteria and is used to communicate both the cell density and the metabolic potential of the environment. The regulation of gene expression in response to changes in cell density is called quorum sensing. Catalyzes the transformation of S-ribosylhomocysteine (RHC) to homocysteine (HC) and 4,5-dihydroxy-2,3-pentadione (DPD). The polypeptide is S-ribosylhomocysteine lyase (Haemophilus ducreyi (strain 35000HP / ATCC 700724)).